The sequence spans 288 residues: Protein FANTASTIC FOUR 3 (288 aa).

A compositionally biased stretch (basic and acidic residues) spans 48–60 (HAEDTRNRNDDKA). 3 disordered regions span residues 48-100 (HAED…YYVQ), 146-172 (ETTT…PLTT), and 222-261 (NEFV…IENV). Residues 66–90 (SDSSGWSSLQSLSSGSSSSTKTTTS) are compositionally biased toward low complexity. Positions 165-217 (DLPPPLTTMRGFQCIQMRPHRENGRLVMTATNAPPRNGCFQADRSNGRLRLSI) constitute an FAF domain. Over residues 223–256 (EFVENEEETIEPEETEEYEEEEEEEEDEDEDEVM) the composition is skewed to acidic residues.

It belongs to the fantastic four family. Expressed in the shoot apex, stamens, young leaves and young siliques, but not in old leaves. Detected in provascular and vascular tissue, but not in the vegetative meristem. In inflorescences, restricted to the vasculature and absent from young flowers, except from anthers.

Its function is as follows. Able to repress WUS when constitutively overexpressed, but have no effect on CLV3. This chain is Protein FANTASTIC FOUR 3 (FAF3), found in Arabidopsis thaliana (Mouse-ear cress).